Reading from the N-terminus, the 274-residue chain is Phosphate import ATP-binding protein PstB (274 aa).

Polar residues predominate over residues 1-11 (MSEISIATSVP). The segment at 1-21 (MSEISIATSVPSGPGPLIGNQ) is disordered. One can recognise an ABC transporter domain in the interval 28–269 (VIVRDLNFYY…PNDRRTQDYI (242 aa)). 60 to 67 (GPSGCGKS) contacts ATP.

It belongs to the ABC transporter superfamily. Phosphate importer (TC 3.A.1.7) family. In terms of assembly, the complex is composed of two ATP-binding proteins (PstB), two transmembrane proteins (PstC and PstA) and a solute-binding protein (PstS).

It localises to the cell inner membrane. The catalysed reaction is phosphate(out) + ATP + H2O = ADP + 2 phosphate(in) + H(+). Functionally, part of the ABC transporter complex PstSACB involved in phosphate import. Responsible for energy coupling to the transport system. This is Phosphate import ATP-binding protein PstB from Rhodopseudomonas palustris (strain BisB5).